Here is a 496-residue protein sequence, read N- to C-terminus: Signal recognition particle subunit SRP54 1 (496 aa).

The segment at 1 to 296 (MVLAQLGGSI…DVKPFVSRLL (296 aa)) is G-domain. GTP is bound by residues 108–115 (GLQGSGKT), 191–195 (DTSGR), and 249–252 (TKMD). An M-domain region spans residues 297–496 (GMGDLSGLVN…MGMFGGGGGE (200 aa)).

It belongs to the GTP-binding SRP family. SRP54 subfamily. In terms of assembly, component of a signal recognition particle (SRP) complex that consists of a 7SL RNA molecule of 300 nucleotides and six protein subunits: SRP72, SRP68, SRP54, SRP19, SRP14 and SRP9.

It is found in the cytoplasm. It localises to the endoplasmic reticulum. It carries out the reaction GTP + H2O = GDP + phosphate + H(+). Component of the signal recognition particle (SRP) complex, a ribonucleoprotein complex that mediates the cotranslational targeting of secretory and membrane proteins to the endoplasmic reticulum (ER). As part of the SRP complex, associates with the SRP receptor (SR) component SRPRA to target secretory proteins to the endoplasmic reticulum membrane. Binds to the signal sequence of presecretory proteins when they emerge from the ribosomes. Displays basal GTPase activity, and stimulates reciprocal GTPase activation of the SR subunit SRPRA. Forms a guanosine 5'-triphosphate (GTP)-dependent complex with the SR subunit SRPRA. SR compaction and GTPase mediated rearrangement of SR drive SRP-mediated cotranslational protein translocation into the ER. Requires the presence of SRP9/SRP14 and/or SRP19 to stably interact with RNA. The sequence is that of Signal recognition particle subunit SRP54 1 from Solanum lycopersicum (Tomato).